Reading from the N-terminus, the 321-residue chain is MSLTSSLLSRVLGGGSCSREELIALSREPLEELCQAANAIREHFCGNVFDLCTIINGRSGKCSENCKYCAQSAHYSTAVEEYPLLSDEALLAGARYNDARGILRYSIVTSGKRLTDEDVDRLCASYRHIAEHCGISLCASHGLISKKHCEQLKAAGVSRYHNNLETSRRNFPNVCTTHTYDDKLQTIKWALEAGLEVCSGGIMGLGETMEDRIDMYMDIAALGIKSMPVNFLTPIPGTPYADMTPLGEEEQLRIVALVRFIMPDGFVRIAAGRNTMKDHGRKIFMSGANAAISGDMLTTAGVTIREDLAMLAELGYEVRMK.

One can recognise a Radical SAM core domain in the interval 44–273 (FCGNVFDLCT…DGFVRIAAGR (230 aa)). [4Fe-4S] cluster-binding residues include Cys-62, Cys-66, and Cys-69. 4 residues coordinate [2Fe-2S] cluster: Ser-106, Cys-138, Cys-198, and Arg-268.

This sequence belongs to the radical SAM superfamily. Biotin synthase family. As to quaternary structure, homodimer. [4Fe-4S] cluster is required as a cofactor. It depends on [2Fe-2S] cluster as a cofactor.

It carries out the reaction (4R,5S)-dethiobiotin + (sulfur carrier)-SH + 2 reduced [2Fe-2S]-[ferredoxin] + 2 S-adenosyl-L-methionine = (sulfur carrier)-H + biotin + 2 5'-deoxyadenosine + 2 L-methionine + 2 oxidized [2Fe-2S]-[ferredoxin]. The protein operates within cofactor biosynthesis; biotin biosynthesis; biotin from 7,8-diaminononanoate: step 2/2. Catalyzes the conversion of dethiobiotin (DTB) to biotin by the insertion of a sulfur atom into dethiobiotin via a radical-based mechanism. The polypeptide is Biotin synthase (Akkermansia muciniphila (strain ATCC BAA-835 / DSM 22959 / JCM 33894 / BCRC 81048 / CCUG 64013 / CIP 107961 / Muc)).